The sequence spans 449 residues: Glutamate--tRNA ligase 2 (449 aa).

Residues 11–21 (PSPTGFLHIGN) carry the 'HIGH' region motif. A 'KMSKS' region motif is present at residues 242–246 (GLSKR). ATP is bound at residue Lys-245.

The protein belongs to the class-I aminoacyl-tRNA synthetase family. Glutamate--tRNA ligase type 1 subfamily. In terms of assembly, monomer.

Its subcellular location is the cytoplasm. It carries out the reaction tRNA(Glu) + L-glutamate + ATP = L-glutamyl-tRNA(Glu) + AMP + diphosphate. Catalyzes the attachment of glutamate to tRNA(Glu) in a two-step reaction: glutamate is first activated by ATP to form Glu-AMP and then transferred to the acceptor end of tRNA(Glu). This Methylorubrum populi (strain ATCC BAA-705 / NCIMB 13946 / BJ001) (Methylobacterium populi) protein is Glutamate--tRNA ligase 2.